Reading from the N-terminus, the 202-residue chain is MSRYRGPRLRIVRRLGDLPGLTRKSARRAYPPGQHGQNRRKRSEYAIRLEEKQKLLYNYGVCERQLLRYVKKARRAGGSTGKVLLELLEMRLDNTVFRLGMAPTIPSARQLVNHGHVTVNGKVVSIASYQCKPGEVISVKEKEKSKEMVKTNLQYPGLANIPSHLEFDKNKLVGKVNGIVEREWVALQINELLIVEYYSRQA.

The tract at residues 22 to 43 is disordered; the sequence is TRKSARRAYPPGQHGQNRRKRS. Positions 90–152 constitute an S4 RNA-binding domain; that stretch reads MRLDNTVFRL…EKSKEMVKTN (63 aa).

Belongs to the universal ribosomal protein uS4 family. Part of the 30S ribosomal subunit. Contacts protein S5. The interaction surface between S4 and S5 is involved in control of translational fidelity.

One of the primary rRNA binding proteins, it binds directly to 16S rRNA where it nucleates assembly of the body of the 30S subunit. Functionally, with S5 and S12 plays an important role in translational accuracy. The sequence is that of Small ribosomal subunit protein uS4 from Trichodesmium erythraeum (strain IMS101).